We begin with the raw amino-acid sequence, 182 residues long: NADH-quinone oxidoreductase subunit B (182 aa).

[4Fe-4S] cluster is bound by residues Cys-46, Cys-47, Cys-112, and Cys-141.

Belongs to the complex I 20 kDa subunit family. NDH-1 is composed of 14 different subunits. Subunits NuoB, C, D, E, F, and G constitute the peripheral sector of the complex. [4Fe-4S] cluster is required as a cofactor.

It is found in the cell inner membrane. It catalyses the reaction a quinone + NADH + 5 H(+)(in) = a quinol + NAD(+) + 4 H(+)(out). Functionally, NDH-1 shuttles electrons from NADH, via FMN and iron-sulfur (Fe-S) centers, to quinones in the respiratory chain. The immediate electron acceptor for the enzyme in this species is believed to be a menaquinone. Couples the redox reaction to proton translocation (for every two electrons transferred, four hydrogen ions are translocated across the cytoplasmic membrane), and thus conserves the redox energy in a proton gradient. The polypeptide is NADH-quinone oxidoreductase subunit B (Flavobacterium johnsoniae (strain ATCC 17061 / DSM 2064 / JCM 8514 / BCRC 14874 / CCUG 350202 / NBRC 14942 / NCIMB 11054 / UW101) (Cytophaga johnsonae)).